A 386-amino-acid polypeptide reads, in one-letter code: Chaperone protein DnaJ (386 aa).

Residues 6–70 enclose the J domain; sequence DYYEVLGVDK…QKRAAYDQYG (65 aa). Residues 141–223 form a CR-type zinc finger; the sequence is GKDTEVSYKR…CHGTGHEKKT (83 aa). Positions 154, 157, 171, 174, 197, 200, 211, and 214 each coordinate Zn(2+). CXXCXGXG motif repeat units follow at residues 154-161, 171-178, 197-204, and 211-218; these read CHTCGGNG, CHKCKGSG, CDVCHGTG, and CETCHGTG. The disordered stretch occupies residues 363-386; sequence LTGQSTEEQQSEGFFDKMKDAFKK. A compositionally biased stretch (polar residues) spans 364–374; it reads TGQSTEEQQSE. The span at 376–386 shows a compositional bias: basic and acidic residues; it reads FFDKMKDAFKK.

The protein belongs to the DnaJ family. Homodimer. Requires Zn(2+) as cofactor.

The protein resides in the cytoplasm. Functionally, participates actively in the response to hyperosmotic and heat shock by preventing the aggregation of stress-denatured proteins and by disaggregating proteins, also in an autonomous, DnaK-independent fashion. Unfolded proteins bind initially to DnaJ; upon interaction with the DnaJ-bound protein, DnaK hydrolyzes its bound ATP, resulting in the formation of a stable complex. GrpE releases ADP from DnaK; ATP binding to DnaK triggers the release of the substrate protein, thus completing the reaction cycle. Several rounds of ATP-dependent interactions between DnaJ, DnaK and GrpE are required for fully efficient folding. Also involved, together with DnaK and GrpE, in the DNA replication of plasmids through activation of initiation proteins. The protein is Chaperone protein DnaJ of Tetragenococcus halophilus (Pediococcus halophilus).